The chain runs to 284 residues: Protein pxr1 (284 aa).

Residues 25 to 71 form the G-patch domain; the sequence is TNRLGFKLLSSYGWVNGNGLGEKQHGRIHNIKVSLKDDTLGIGAKAT. The segment at 149–253 is disordered; sequence DEDRVCEDAS…KVKEGNRPAS (105 aa). Phosphoserine occurs at positions 159 and 160. Composition is skewed to basic residues over residues 166-181 and 196-206; these read EKRK…KKKT and TKKKKKEHKKK. Basic and acidic residues-rich tracts occupy residues 207–224 and 233–249; these read DKES…DKEE and KDKP…KEGN.

Belongs to the PINX1 family.

The protein resides in the nucleus. Its subcellular location is the nucleolus. Functionally, involved in rRNA-processing at A0, A1 and A2 sites and negatively regulates telomerase. The sequence is that of Protein pxr1 (pxr1) from Schizosaccharomyces pombe (strain 972 / ATCC 24843) (Fission yeast).